A 133-amino-acid chain; its full sequence is Protein FwdD (133 aa).

This chain is Protein FwdD (fwdD), found in Methanocaldococcus jannaschii (strain ATCC 43067 / DSM 2661 / JAL-1 / JCM 10045 / NBRC 100440) (Methanococcus jannaschii).